The sequence spans 151 residues: Large ribosomal subunit protein bL9 (151 aa).

It belongs to the bacterial ribosomal protein bL9 family.

Its function is as follows. Binds to the 23S rRNA. The polypeptide is Large ribosomal subunit protein bL9 (Rhodococcus erythropolis (strain PR4 / NBRC 100887)).